The chain runs to 406 residues: MSFRSVIQEVKGEIGAISRRGFRSRPGRVRRVAAAAEEPPDESSAAALVMRESCWTQLPPELLREVLARVEESEGWWPRRRDVVACAGVCRSWRGIVREIVRTPEASGNLTFPISLKQPGPRDAPMKCFIVRNRTTQTYYLYIGLTDALTDDGKFLLAARKCRRTTCTEYLISLDMNDISKRTDSYVGKLRSNFLGTKFTIYDAHPPYAGDVISKGQSARVIGSNHLSPRIPAGNYPVSHISYELNVLGSRGPRRMHCAMDSIPVSAIEQGGTAPTQTEFPLSYHESFTSIPFFKSKSVRANNSTASLLTQNGSKLVLKNKSPRWHEHLQCWCLNFHGRVTVASVKNFQLVASDESNPTNQEHDDVILQFGKVGKDMFTMDYRYPISAFQAFAICLSSFDTKIACE.

One can recognise an F-box domain in the interval 53–108 (SCWTQLPPELLREVLARVEESEGWWPRRRDVVACAGVCRSWRGIVREIVRTPEASG).

It belongs to the TUB family. In terms of tissue distribution, ubiquitous.

This Oryza sativa subsp. japonica (Rice) protein is Tubby-like F-box protein 11 (TULP11).